The following is a 430-amino-acid chain: Trigger factor (430 aa).

Residues 157–242 (GDLVALETWS…AVEVSEPVLP (86 aa)) form the PPIase FKBP-type domain.

The protein belongs to the FKBP-type PPIase family. Tig subfamily.

The protein resides in the cytoplasm. It catalyses the reaction [protein]-peptidylproline (omega=180) = [protein]-peptidylproline (omega=0). In terms of biological role, involved in protein export. Acts as a chaperone by maintaining the newly synthesized protein in an open conformation. Functions as a peptidyl-prolyl cis-trans isomerase. This chain is Trigger factor, found in Xanthomonas campestris pv. campestris (strain B100).